The primary structure comprises 241 residues: Chaperone protein FimC (241 aa).

The signal sequence occupies residues 1–36 (MSNKNVNVRKSQEITFCLLAGILMFMAMMVAGRAEA).

This sequence belongs to the periplasmic pilus chaperone family.

The protein localises to the periplasm. Functionally, required for the biogenesis of type 1 fimbriae. Binds and interact with FimH. This chain is Chaperone protein FimC (fimC), found in Escherichia coli (strain K12).